The sequence spans 336 residues: DNA-directed RNA polymerase subunit alpha (336 aa).

An alpha N-terminal domain (alpha-NTD) region spans residues 1–226; the sequence is MLIAQRPTLS…ELFGLARELN (226 aa). The alpha C-terminal domain (alpha-CTD) stretch occupies residues 241 to 336; sequence AALAADMALP…DDAAFSDDEL (96 aa).

It belongs to the RNA polymerase alpha chain family. Homodimer. The RNAP catalytic core consists of 2 alpha, 1 beta, 1 beta' and 1 omega subunit. When a sigma factor is associated with the core the holoenzyme is formed, which can initiate transcription.

The enzyme catalyses RNA(n) + a ribonucleoside 5'-triphosphate = RNA(n+1) + diphosphate. Its function is as follows. DNA-dependent RNA polymerase catalyzes the transcription of DNA into RNA using the four ribonucleoside triphosphates as substrates. In Paenarthrobacter aurescens (strain TC1), this protein is DNA-directed RNA polymerase subunit alpha.